The following is a 520-amino-acid chain: Amphoterin-induced protein 2 (520 aa).

The signal sequence occupies residues 1-37 (MSLRFHTLPTLPRAVKPGCRELLCLLVIAVMVSPSSS). The 30-residue stretch at 38–67 (GLCPTACICATDIVSCTNKNLSKVPGNLFR) folds into the LRRNT domain. The Extracellular segment spans residues 38 to 398 (GLCPTACICA…SHHAHEAFNT (361 aa)). 2 disulfides stabilise this stretch: Cys40–Cys46 and Cys44–Cys53. The N-linked (GlcNAc...) asparagine glycan is linked to Asn57. LRR repeat units lie at residues 68–89 (LIKR…WIPV), 93–114 (KLST…SFST), 117–138 (NLKC…MFQE), 141–162 (VLEV…AFGG), 165–186 (HLQK…LYVG), and 192–213 (DLTF…HINL). Asn103 is a glycosylation site (N-linked (GlcNAc...) asparagine). Residues 227-283 (NPFVCDCSLYSLLTFWYRRHFNSVTDFKHDYTCRLWLDSRHSHQLLLLQDSFLNCSH) enclose the LRRCT domain. 2 disulfides stabilise this stretch: Cys231/Cys259 and Cys233/Cys281. Residues Asn280, Asn287, Asn344, Asn372, Asn380, Asn383, and Asn387 are each glycosylated (N-linked (GlcNAc...) asparagine). Residues 288 to 378 (GSFHALGFIH…RLLNETVDIM (91 aa)) enclose the Ig-like C2-type domain. A disulfide bridge connects residues Cys309 and Cys362. The chain crosses the membrane as a helical span at residues 399–419 (AFTTLAACVVSIVLVLLYLYL). The Cytoplasmic portion of the chain corresponds to 420 to 520 (TPCPCKCRDK…FSDTPFVAST (101 aa)). 2 disordered regions span residues 437-458 (QSNA…AEDR) and 498-520 (SRAK…VAST).

Belongs to the immunoglobulin superfamily. AMIGO family. As to quaternary structure, binds itself as well as AMIGO1 and AMIGO3. As to expression, highest levels in the lung. High levels in cerebellar granule neurons and Purkinje cells. Also in pyramidal cells between CA1 and CA3 regions of the hippocampus and granule cells of the dentate gyrus.

Its subcellular location is the cell membrane. It localises to the nucleus. Its function is as follows. Required for depolarization-dependent survival of cultured cerebellar granule neurons. May mediate homophilic as well as heterophilic cell-cell interaction with AMIGO1 or AMIGO3. May contribute to signal transduction through its intracellular domain. The sequence is that of Amphoterin-induced protein 2 from Rattus norvegicus (Rat).